The following is a 161-amino-acid chain: Chaperone protein dnaJ 11, chloroplastic (161 aa).

The span at Met-1–Pro-18 shows a compositional bias: low complexity. The disordered stretch occupies residues Met-1 to Arg-31. A chloroplast-targeting transit peptide spans Met-1 to Leu-36. Residues Ser-65–Met-133 form the J domain.

The protein belongs to the DnaJ family. C/III subfamily. In terms of tissue distribution, expressed in roots, stems, leaves, flowers and developing siliques.

The protein localises to the plastid. It localises to the chloroplast stroma. Its function is as follows. Plays a continuous role in plant development probably in the structural organization of compartments. The polypeptide is Chaperone protein dnaJ 11, chloroplastic (ATJ11) (Arabidopsis thaliana (Mouse-ear cress)).